Reading from the N-terminus, the 213-residue chain is Orotate phosphoribosyltransferase (213 aa).

Position 26 (lysine 26) interacts with 5-phospho-alpha-D-ribose 1-diphosphate. Residue 34–35 (FF) coordinates orotate. 5-phospho-alpha-D-ribose 1-diphosphate-binding positions include 72-73 (YK), arginine 99, lysine 100, lysine 103, histidine 105, and 124-132 (DDVITAGTA). Positions 128 and 156 each coordinate orotate.

It belongs to the purine/pyrimidine phosphoribosyltransferase family. PyrE subfamily. As to quaternary structure, homodimer. The cofactor is Mg(2+).

It carries out the reaction orotidine 5'-phosphate + diphosphate = orotate + 5-phospho-alpha-D-ribose 1-diphosphate. It participates in pyrimidine metabolism; UMP biosynthesis via de novo pathway; UMP from orotate: step 1/2. Functionally, catalyzes the transfer of a ribosyl phosphate group from 5-phosphoribose 1-diphosphate to orotate, leading to the formation of orotidine monophosphate (OMP). The protein is Orotate phosphoribosyltransferase of Shigella flexneri serotype 5b (strain 8401).